Here is a 261-residue protein sequence, read N- to C-terminus: Sugar fermentation stimulation protein homolog (261 aa).

Residues 1–23 form a disordered region; that stretch reads MTDSAKPQNPDPGHESRRVAPLA.

It belongs to the SfsA family.

The chain is Sugar fermentation stimulation protein homolog from Syntrophobacter fumaroxidans (strain DSM 10017 / MPOB).